We begin with the raw amino-acid sequence, 439 residues long: Transmembrane protease serine 11F (439 aa).

The Cytoplasmic portion of the chain corresponds to 1 to 33 (MMYAPVEFSQTAYPRIEYQRRQQQFWDPIRLAL). A helical; Signal-anchor for type II membrane protein membrane pass occupies residues 34–54 (FTLAIVAIVGITIGIVTHFVV). The Extracellular portion of the chain corresponds to 55–439 (EDDKSFYYLA…RDWIASKTGL (385 aa)). An SEA domain is found at 58-176 (KSFYYLASFQ…PSFSLTPIDS (119 aa)). The region spanning 207–438 (IVQGRETAME…YRDWIASKTG (232 aa)) is the Peptidase S1 domain. The cysteines at positions 234 and 250 are disulfide-linked. Active-site charge relay system residues include His-249 and Asp-294. 2 disulfide bridges follow: Cys-359/Cys-375 and Cys-386/Cys-414. The Charge relay system role is filled by Ser-390.

The protein belongs to the peptidase S1 family.

The protein localises to the membrane. Functionally, probable serine protease. This is Transmembrane protease serine 11F (Tmprss11f) from Mus musculus (Mouse).